We begin with the raw amino-acid sequence, 337 residues long: UPF0284 protein AF_0276 (337 aa).

The protein belongs to the UPF0284 family.

The protein is UPF0284 protein AF_0276 of Archaeoglobus fulgidus (strain ATCC 49558 / DSM 4304 / JCM 9628 / NBRC 100126 / VC-16).